The primary structure comprises 210 residues: Glutathione S-transferase P 1 (210 aa).

The 80-residue stretch at 2–81 (PPYTIVYFPV…HLGRSLGLYG (80 aa)) folds into the GST N-terminal domain. Residue Y4 is modified to Phosphotyrosine; by EGFR. Residues Y8, R14, W39, K45, and 52–53 (QL) contribute to the glutathione site. At T62 the chain carries Phosphothreonine. Glutathione is bound at residue 65 to 66 (QS). A GST C-terminal domain is found at 83–204 (NQREAAQMDM…SSPEHVNRPI (122 aa)). Residues K103 and K116 each carry the N6-succinyllysine modification. K128 carries the post-translational modification N6-acetyllysine.

As to quaternary structure, homodimer. Interacts with CDK5. As to expression, ubiquitously expressed.

It is found in the cytoplasm. Its subcellular location is the mitochondrion. The protein resides in the nucleus. It carries out the reaction RX + glutathione = an S-substituted glutathione + a halide anion + H(+). It catalyses the reaction prostaglandin J2 + glutathione = prostaglandin J2-S-(R)-glutathione. The enzyme catalyses prostaglandin J2 + glutathione = prostaglandin J2-S-(S)-glutathione. The catalysed reaction is prostaglandin A2 + glutathione = prostaglandin A2-S-(S)-glutathione. It carries out the reaction 11(S)-hydroxy-14(S),15(S)-epoxy-(5Z,8Z,12E)-eicosatrienoate + glutathione = (11S,15S)-dihydroxy-14(R)-S-glutathionyl-(5Z,8Z,12E)-eicosatrienoate. Functionally, conjugation of reduced glutathione to a wide number of exogenous and endogenous hydrophobic electrophiles. Involved in the formation of glutathione conjugates of both prostaglandin A2 (PGA2) and prostaglandin J2 (PGJ2). Participates in the formation of novel hepoxilin regioisomers. Negatively regulates CDK5 activity via p25/p35 translocation to prevent neurodegeneration. This is Glutathione S-transferase P 1 from Mus musculus (Mouse).